The chain runs to 224 residues: ATP synthase subunit a (224 aa).

6 consecutive transmembrane segments (helical) span residues 17–37, 72–92, 99–119, 125–145, 170–190, and 195–215; these read LSLNWLSTFLGLLMIPSIYWL, IFISLFSLILFNNFMGLFPYI, LTLTLSLALPLWLCFMLYGWI, MFAHLVPQGTPAVLMPFMVCI, LLLTLLGNTGPSMSYLLVTFL, and IALLVLESAVAMIQSYVFAVL.

It belongs to the ATPase A chain family. F-type ATPases have 2 components, CF(1) - the catalytic core - and CF(0) - the membrane proton channel. CF(1) has five subunits: alpha(3), beta(3), gamma(1), delta(1), epsilon(1). CF(0) has three main subunits: a, b and c.

The protein resides in the mitochondrion inner membrane. Mitochondrial membrane ATP synthase (F(1)F(0) ATP synthase or Complex V) produces ATP from ADP in the presence of a proton gradient across the membrane which is generated by electron transport complexes of the respiratory chain. F-type ATPases consist of two structural domains, F(1) - containing the extramembraneous catalytic core and F(0) - containing the membrane proton channel, linked together by a central stalk and a peripheral stalk. During catalysis, ATP synthesis in the catalytic domain of F(1) is coupled via a rotary mechanism of the central stalk subunits to proton translocation. Key component of the proton channel; it may play a direct role in the translocation of protons across the membrane. In Drosophila mauritiana (Fruit fly), this protein is ATP synthase subunit a (mt:ATPase6).